A 345-amino-acid polypeptide reads, in one-letter code: Biotin synthase (345 aa).

The region spanning arginine 38–alanine 256 is the Radical SAM core domain. [4Fe-4S] cluster-binding residues include cysteine 53, cysteine 57, and cysteine 60. [2Fe-2S] cluster contacts are provided by cysteine 97, cysteine 128, cysteine 188, and arginine 260.

This sequence belongs to the radical SAM superfamily. Biotin synthase family. Homodimer. [4Fe-4S] cluster is required as a cofactor. [2Fe-2S] cluster serves as cofactor.

The enzyme catalyses (4R,5S)-dethiobiotin + (sulfur carrier)-SH + 2 reduced [2Fe-2S]-[ferredoxin] + 2 S-adenosyl-L-methionine = (sulfur carrier)-H + biotin + 2 5'-deoxyadenosine + 2 L-methionine + 2 oxidized [2Fe-2S]-[ferredoxin]. It functions in the pathway cofactor biosynthesis; biotin biosynthesis; biotin from 7,8-diaminononanoate: step 2/2. Functionally, catalyzes the conversion of dethiobiotin (DTB) to biotin by the insertion of a sulfur atom into dethiobiotin via a radical-based mechanism. The chain is Biotin synthase from Pectobacterium atrosepticum (strain SCRI 1043 / ATCC BAA-672) (Erwinia carotovora subsp. atroseptica).